We begin with the raw amino-acid sequence, 84 residues long: Small ribosomal subunit protein uS17 (84 aa).

Belongs to the universal ribosomal protein uS17 family. As to quaternary structure, part of the 30S ribosomal subunit.

In terms of biological role, one of the primary rRNA binding proteins, it binds specifically to the 5'-end of 16S ribosomal RNA. This chain is Small ribosomal subunit protein uS17, found in Clostridium botulinum (strain Okra / Type B1).